The sequence spans 76 residues: MPSHQHQNQQQCTPQAQQQQVKQPCQPPPTKCQEACVPKTKDPCVPQAKKQCPARSTTNPAQEKCPAQQDPKCKQK.

The segment at 38–76 (PKTKDPCVPQAKKQCPARSTTNPAQEKCPAQQDPKCKQK) is disordered.

This sequence belongs to the cornifin (SPRR) family. In terms of processing, cross-linked to membrane proteins by transglutaminase.

It is found in the cytoplasm. It localises to the cell cortex. In terms of biological role, cross-linked envelope protein of keratinocytes. Involved in UV-induced cornification. The sequence is that of Small proline-rich protein 4 (Sprr4) from Mus musculus (Mouse).